Here is a 118-residue protein sequence, read N- to C-terminus: Endoribonuclease MazF9 (118 aa).

This sequence belongs to the PemK/MazF family. Forms a complex with cognate antitoxin MazE9.

Toxic component of a type II toxin-antitoxin (TA) system. Upon expression in E.coli and M.smegmatis inhibits cell growth and colony formation. Its toxic effect is neutralized by coexpression with cognate antitoxin MazE9. Acts as an mRNA interferase, specifically cleaving between U and C in UAC sequences. May cleave its cognate antitoxin's gene. In E.coli expression with non-cognate antitoxins VapB27 and VapB40 partially neutralizes the toxin. In Mycobacterium tuberculosis (strain ATCC 25618 / H37Rv), this protein is Endoribonuclease MazF9 (mazF9).